A 515-amino-acid polypeptide reads, in one-letter code: Mucin-like protein Glc1.8b (515 aa).

Positions 1 to 20 (MSQITLIILVLAIGFSCTKS) are cleaved as a signal peptide. Over 21–467 (HPINSTRDGE…ANDIKKPAFP (447 aa)) the chain is Extracellular. N-linked (GlcNAc...) asparagine; by host glycans are attached at residues N24, N45, N51, N60, N85, N93, N102, N123, N129, N138, N180, N201, N207, N216, N258, N279, N285, N294, N319, N327, N336, N357, N363, N372, N397, N405, N413, N434, and N441. Residues 80–114 (SKKDENITGQSEINTSAKSQPINSTRDGEDSGTDL) are disordered. Residues 86–104 (ITGQSEINTSAKSQPINST) show a composition bias toward polar residues. The disordered stretch occupies residues 314–358 (SKKDENITGQSEINTSAKSQPINSTRDGEDSGTDLKNLLTDPANT). Residues 320 to 338 (ITGQSEINTSAKSQPINST) show a composition bias toward polar residues. The tract at residues 393-413 (RKDENVTGQSEFNISTNSNLN) is disordered. A helical membrane pass occupies residues 468–488 (YCIILITFQIVTVGMIIYLVF). Topologically, residues 489-515 (RTMRKPCQSERAIPLNSFGFGNNSSYE) are cytoplasmic.

This sequence belongs to the polydnaviridae Glc1.8 protein family.

It is found in the host membrane. Its function is as follows. Involved in suppression of the insect cellular immune response. Inhibits host hemocyte adhesion and phagocytosis. This Microplitis demolitor (Parasitoid wasp) protein is Mucin-like protein Glc1.8b (O16).